The sequence spans 340 residues: Phenylalanine--tRNA ligase alpha subunit (340 aa).

Glu255 is a binding site for Mg(2+).

This sequence belongs to the class-II aminoacyl-tRNA synthetase family. Phe-tRNA synthetase alpha subunit type 1 subfamily. In terms of assembly, tetramer of two alpha and two beta subunits. The cofactor is Mg(2+).

It is found in the cytoplasm. The enzyme catalyses tRNA(Phe) + L-phenylalanine + ATP = L-phenylalanyl-tRNA(Phe) + AMP + diphosphate + H(+). In Exiguobacterium sibiricum (strain DSM 17290 / CCUG 55495 / CIP 109462 / JCM 13490 / 255-15), this protein is Phenylalanine--tRNA ligase alpha subunit.